Here is a 347-residue protein sequence, read N- to C-terminus: Dihydroorotase (347 aa).

His-17 and His-19 together coordinate Zn(2+). Substrate is bound by residues 19-21 and Asn-45; that span reads HLR. Zn(2+) is bound by residues Lys-103, His-140, and His-178. Residue Lys-103 is modified to N6-carboxylysine. His-140 contacts substrate. A substrate-binding site is contributed by Leu-223. Asp-251 provides a ligand contact to Zn(2+). Asp-251 is an active-site residue. His-255 and Ala-267 together coordinate substrate.

It belongs to the metallo-dependent hydrolases superfamily. DHOase family. Class II DHOase subfamily. As to quaternary structure, homodimer. Zn(2+) serves as cofactor.

It carries out the reaction (S)-dihydroorotate + H2O = N-carbamoyl-L-aspartate + H(+). It participates in pyrimidine metabolism; UMP biosynthesis via de novo pathway; (S)-dihydroorotate from bicarbonate: step 3/3. Functionally, catalyzes the reversible cyclization of carbamoyl aspartate to dihydroorotate. The protein is Dihydroorotase of Citrobacter koseri (strain ATCC BAA-895 / CDC 4225-83 / SGSC4696).